Consider the following 334-residue polypeptide: Ketol-acid reductoisomerase (NADP(+)) (334 aa).

Positions Ala3–Thr183 constitute a KARI N-terminal Rossmann domain. NADP(+)-binding positions include Tyr26–Gln29, Arg49, Ser52, and Asp84–Gln87. His109 is a catalytic residue. Residue Gly135 coordinates NADP(+). In terms of domain architecture, KARI C-terminal knotted spans Thr184–Ile329. Residues Asp192, Glu196, Glu228, and Glu232 each contribute to the Mg(2+) site. Ser253 contributes to the substrate binding site.

It belongs to the ketol-acid reductoisomerase family. Mg(2+) is required as a cofactor.

It catalyses the reaction (2R)-2,3-dihydroxy-3-methylbutanoate + NADP(+) = (2S)-2-acetolactate + NADPH + H(+). It carries out the reaction (2R,3R)-2,3-dihydroxy-3-methylpentanoate + NADP(+) = (S)-2-ethyl-2-hydroxy-3-oxobutanoate + NADPH + H(+). The protein operates within amino-acid biosynthesis; L-isoleucine biosynthesis; L-isoleucine from 2-oxobutanoate: step 2/4. It participates in amino-acid biosynthesis; L-valine biosynthesis; L-valine from pyruvate: step 2/4. Involved in the biosynthesis of branched-chain amino acids (BCAA). Catalyzes an alkyl-migration followed by a ketol-acid reduction of (S)-2-acetolactate (S2AL) to yield (R)-2,3-dihydroxy-isovalerate. In the isomerase reaction, S2AL is rearranged via a Mg-dependent methyl migration to produce 3-hydroxy-3-methyl-2-ketobutyrate (HMKB). In the reductase reaction, this 2-ketoacid undergoes a metal-dependent reduction by NADPH to yield (R)-2,3-dihydroxy-isovalerate. The sequence is that of Ketol-acid reductoisomerase (NADP(+)) from Rhodopirellula baltica (strain DSM 10527 / NCIMB 13988 / SH1).